The chain runs to 715 residues: Polyribonucleotide nucleotidyltransferase (715 aa).

Mg(2+) contacts are provided by Asp-485 and Asp-491. In terms of domain architecture, KH spans 552–611 (PRIHTMKIDPKKIKDVIGKGGAVIRALTEETGTSIDIDDDGTVKIAATDNNAAKAVMARI). Residues 621–689 (NAIYKGKVTR…RQNRIRLTMK (69 aa)) form the S1 motif domain. Residues 695–715 (TPVAENVTEEAEVSSEQQAEI) form a disordered region.

It belongs to the polyribonucleotide nucleotidyltransferase family. Component of the RNA degradosome, which is a multiprotein complex involved in RNA processing and mRNA degradation. Mg(2+) is required as a cofactor.

The protein resides in the cytoplasm. It catalyses the reaction RNA(n+1) + phosphate = RNA(n) + a ribonucleoside 5'-diphosphate. Its function is as follows. Involved in mRNA degradation. Catalyzes the phosphorolysis of single-stranded polyribonucleotides processively in the 3'- to 5'-direction. This Actinobacillus pleuropneumoniae serotype 7 (strain AP76) protein is Polyribonucleotide nucleotidyltransferase.